Reading from the N-terminus, the 454-residue chain is Epoxide hydrolase 1 (454 aa).

The helical transmembrane segment at 1 to 21 threads the bilayer; the sequence is MWLEILLASVLGFVIYWFVSK. At 22 to 454 the chain is on the cytoplasmic side; that stretch reads DKEETLLLGD…RKFMGLLEQQ (433 aa). Asp-226 (nucleophile) is an active-site residue. The residue at position 294 (Arg-294) is a Dimethylated arginine. Tyr-373 serves as the catalytic Proton donor. His-430 acts as the Proton acceptor in catalysis.

This sequence belongs to the peptidase S33 family.

It is found in the microsome membrane. Its subcellular location is the endoplasmic reticulum membrane. It carries out the reaction cis-stilbene oxide + H2O = (1R,2R)-hydrobenzoin. The catalysed reaction is 1-(4-methoxyphenyl)-N-methyl-N-[(3-methyloxetan-3-yl)methyl]methanamine + H2O = 2-{[(4-methoxybenzyl)(methyl)amino]methyl}-2-methylpropane-1,3-diol. The enzyme catalyses 8,9-epoxy-(5Z,11Z,14Z)-eicosatrienoate + H2O = 8,9-dihydroxy-(5Z,11Z,14Z)-eicosatrienoate. It catalyses the reaction 11,12-epoxy-(5Z,8Z,14Z)-eicosatrienoate + H2O = 11,12-dihydroxy-(5Z,8Z,14Z)-eicosatrienoate. It carries out the reaction 2-(5Z,8Z,11Z,14Z-eicosatetraenoyl)-glycerol + H2O = glycerol + (5Z,8Z,11Z,14Z)-eicosatetraenoate + H(+). With respect to regulation, inhibited by 10-hydroxystearamide and methoxy-arachidonyl fluorophosphate. Biotransformation enzyme that catalyzes the hydrolysis of arene and aliphatic epoxides to less reactive and more water soluble dihydrodiols by the trans addition of water. May play a role in the metabolism of endogenous lipids such as epoxide-containing fatty acids. Metabolizes the abundant endocannabinoid 2-arachidonoylglycerol (2-AG) to free arachidonic acid (AA) and glycerol. Binds 20(S)-hydroxycholesterol (20(S)-OHC). This is Epoxide hydrolase 1 (EPHX1) from Sus scrofa (Pig).